The sequence spans 329 residues: Phenylalanine--tRNA ligase alpha subunit (329 aa).

Glutamate 254 is a binding site for Mg(2+).

The protein belongs to the class-II aminoacyl-tRNA synthetase family. Phe-tRNA synthetase alpha subunit type 1 subfamily. In terms of assembly, tetramer of two alpha and two beta subunits. The cofactor is Mg(2+).

The protein resides in the cytoplasm. It carries out the reaction tRNA(Phe) + L-phenylalanine + ATP = L-phenylalanyl-tRNA(Phe) + AMP + diphosphate + H(+). This is Phenylalanine--tRNA ligase alpha subunit from Haemophilus influenzae (strain PittEE).